We begin with the raw amino-acid sequence, 310 residues long: Putative S-adenosyl-L-methionine-dependent methyltransferase MMAR_3534 (310 aa).

S-adenosyl-L-methionine contacts are provided by residues aspartate 131 and 160–161; that span reads DL.

Belongs to the UPF0677 family.

In terms of biological role, exhibits S-adenosyl-L-methionine-dependent methyltransferase activity. The chain is Putative S-adenosyl-L-methionine-dependent methyltransferase MMAR_3534 from Mycobacterium marinum (strain ATCC BAA-535 / M).